We begin with the raw amino-acid sequence, 169 residues long: Large ribosomal subunit protein uL5 (169 aa).

It belongs to the universal ribosomal protein uL5 family. In terms of assembly, part of the 50S ribosomal subunit; contacts the 5S rRNA and probably tRNA. Forms a bridge to the 30S subunit in the 70S ribosome.

Functionally, this is one of the proteins that bind and probably mediate the attachment of the 5S RNA into the large ribosomal subunit, where it forms part of the central protuberance. In the 70S ribosome it contacts protein S13 of the 30S subunit (bridge B1b), connecting the 2 subunits; this bridge is implicated in subunit movement. May contact the P site tRNA; the 5S rRNA and some of its associated proteins might help stabilize positioning of ribosome-bound tRNAs. This Methanosarcina mazei (strain ATCC BAA-159 / DSM 3647 / Goe1 / Go1 / JCM 11833 / OCM 88) (Methanosarcina frisia) protein is Large ribosomal subunit protein uL5.